A 139-amino-acid chain; its full sequence is Large-conductance mechanosensitive channel (139 aa).

2 consecutive transmembrane segments (helical) span residues 16 to 36 (VIDLAVGVIIGAAFNGIVKSL) and 79 to 99 (GAFVNTVIQFFIVATVVFLLV).

Belongs to the MscL family. Homopentamer.

It localises to the cell inner membrane. Its function is as follows. Channel that opens in response to stretch forces in the membrane lipid bilayer. May participate in the regulation of osmotic pressure changes within the cell. In Caulobacter vibrioides (strain ATCC 19089 / CIP 103742 / CB 15) (Caulobacter crescentus), this protein is Large-conductance mechanosensitive channel.